Reading from the N-terminus, the 208-residue chain is Large ribosomal subunit protein bL25 (208 aa).

This sequence belongs to the bacterial ribosomal protein bL25 family. CTC subfamily. As to quaternary structure, part of the 50S ribosomal subunit; part of the 5S rRNA/L5/L18/L25 subcomplex. Contacts the 5S rRNA. Binds to the 5S rRNA independently of L5 and L18.

This is one of the proteins that binds to the 5S RNA in the ribosome where it forms part of the central protuberance. This Bartonella quintana (strain Toulouse) (Rochalimaea quintana) protein is Large ribosomal subunit protein bL25.